We begin with the raw amino-acid sequence, 59 residues long: Large ribosomal subunit protein bL32 (59 aa).

Residues 1-40 are disordered; it reads MAVQQNKKSPSKRGMHRSHDFLRTTPLSVDPGTGEVHLRH.

This sequence belongs to the bacterial ribosomal protein bL32 family.

The chain is Large ribosomal subunit protein bL32 from Nitrosospira multiformis (strain ATCC 25196 / NCIMB 11849 / C 71).